A 513-amino-acid polypeptide reads, in one-letter code: Probable DNA ligase (513 aa).

Residue Glu215 coordinates ATP. The N6-AMP-lysine intermediate role is filled by Lys217. Arg222, Arg237, Glu266, Phe306, Arg378, and Lys384 together coordinate ATP.

This sequence belongs to the ATP-dependent DNA ligase family. The cofactor is Mg(2+).

The enzyme catalyses ATP + (deoxyribonucleotide)n-3'-hydroxyl + 5'-phospho-(deoxyribonucleotide)m = (deoxyribonucleotide)n+m + AMP + diphosphate.. Its function is as follows. DNA ligase that seals nicks in double-stranded DNA during DNA replication, DNA recombination and DNA repair. The protein is Probable DNA ligase of Mycobacterium marinum (strain ATCC BAA-535 / M).